A 473-amino-acid polypeptide reads, in one-letter code: Ornithine aminotransferase, mitochondrial (473 aa).

A mitochondrion-targeting transit peptide spans 1-32; it reads MAAALARRGGGGLARALARGRGMCSATAAERA. The residue at position 293 (Lys-293) is an N6-(pyridoxal phosphate)lysine.

The protein belongs to the class-III pyridoxal-phosphate-dependent aminotransferase family. In terms of assembly, homotetramer. It depends on pyridoxal 5'-phosphate as a cofactor.

The protein localises to the mitochondrion matrix. The enzyme catalyses a 2-oxocarboxylate + L-ornithine = L-glutamate 5-semialdehyde + an L-alpha-amino acid. It functions in the pathway amino-acid biosynthesis; L-proline biosynthesis; L-glutamate 5-semialdehyde from L-ornithine: step 1/1. Its function is as follows. Confers drought and oxidative stress tolerance mainly through enhancing ROS-scavenging capacity and Pro pre-accumulation. The chain is Ornithine aminotransferase, mitochondrial (OAT) from Oryza sativa subsp. japonica (Rice).